The sequence spans 206 residues: MTNRVLVIASGNAGKIREFSNLLQELPLQVNPQPDGIQVEETGITFRDNALLKARAVAEATGHWALADDSGLSVDALGGAPGVYSARYANSDPERIERLLKELGDRTDRQARFSAALCIAAPDGSVLAAVEGYCEGSITFSARGTQGFGYDPVFEVKNSGLTFAEMTQDHKKQHGHRGRAFALLKPELEKLLENDPGQDAGATPIP.

10–15 serves as a coordination point for substrate; the sequence is SGNAGK. 2 residues coordinate Mg(2+): Glu-40 and Asp-69. The Proton acceptor role is filled by Asp-69. Substrate-binding positions include Ser-70, 148-151, Lys-171, and 176-177; these read FGYD and HR.

This sequence belongs to the HAM1 NTPase family. Homodimer. Requires Mg(2+) as cofactor.

The enzyme catalyses XTP + H2O = XMP + diphosphate + H(+). It carries out the reaction dITP + H2O = dIMP + diphosphate + H(+). It catalyses the reaction ITP + H2O = IMP + diphosphate + H(+). In terms of biological role, pyrophosphatase that catalyzes the hydrolysis of nucleoside triphosphates to their monophosphate derivatives, with a high preference for the non-canonical purine nucleotides XTP (xanthosine triphosphate), dITP (deoxyinosine triphosphate) and ITP. Seems to function as a house-cleaning enzyme that removes non-canonical purine nucleotides from the nucleotide pool, thus preventing their incorporation into DNA/RNA and avoiding chromosomal lesions. The protein is dITP/XTP pyrophosphatase of Synechococcus sp. (strain CC9311).